Consider the following 487-residue polypeptide: mRNA cleavage and polyadenylation factor CLP1 (487 aa).

ATP contacts are provided by residues E19, K59, and 134 to 139 (NSGKTT).

This sequence belongs to the Clp1 family. Clp1 subfamily. Component of a pre-mRNA cleavage factor complex. Interacts directly with PCF11.

The protein resides in the nucleus. Functionally, required for endonucleolytic cleavage during polyadenylation-dependent pre-mRNA 3'-end formation. This chain is mRNA cleavage and polyadenylation factor CLP1, found in Laccaria bicolor (strain S238N-H82 / ATCC MYA-4686) (Bicoloured deceiver).